Consider the following 207-residue polypeptide: Guanylate kinase (207 aa).

The Guanylate kinase-like domain maps to 6–185 (GLLIVLSGPS…AKNRIQSIVE (180 aa)). ATP is bound at residue 13-20 (GPSGVGKG).

Belongs to the guanylate kinase family.

It is found in the cytoplasm. It carries out the reaction GMP + ATP = GDP + ADP. Essential for recycling GMP and indirectly, cGMP. The protein is Guanylate kinase of Staphylococcus epidermidis (strain ATCC 12228 / FDA PCI 1200).